The chain runs to 188 residues: Elongation factor P (188 aa).

This sequence belongs to the elongation factor P family.

It is found in the cytoplasm. It participates in protein biosynthesis; polypeptide chain elongation. Involved in peptide bond synthesis. Stimulates efficient translation and peptide-bond synthesis on native or reconstituted 70S ribosomes in vitro. Probably functions indirectly by altering the affinity of the ribosome for aminoacyl-tRNA, thus increasing their reactivity as acceptors for peptidyl transferase. This chain is Elongation factor P, found in Methylobacterium radiotolerans (strain ATCC 27329 / DSM 1819 / JCM 2831 / NBRC 15690 / NCIMB 10815 / 0-1).